A 177-amino-acid chain; its full sequence is UPF0114 protein HPP12_0190 (177 aa).

Transmembrane regions (helical) follow at residues 15–35 (WLLAPLCIAMSLVLVVLGYAF), 54–74 (LVLSALGLVDLLFMAGLVLMV), 102–122 (FNALKLKVSLSIVAISAIFLL), and 145–165 (PIFWQVVINLVFVCSALLAAV).

Belongs to the UPF0114 family.

The protein localises to the cell membrane. The protein is UPF0114 protein HPP12_0190 of Helicobacter pylori (strain P12).